The following is a 68-amino-acid chain: Purkinje cell protein 4-like protein 1 (68 aa).

Over residues 1–16 (MSELNTKTSPATNQAA) the composition is skewed to polar residues. A disordered region spans residues 1-45 (MSELNTKTSPATNQAAGQEEKGKAGNVKKAEEEEEIDIDLTAPET). Phosphothreonine is present on Thr8. Residues 18–31 (QEEKGKAGNVKKAE) are compositionally biased toward basic and acidic residues. Residues 45–68 (TEKAALAIQGKFRRFQKRKKDPSS) enclose the IQ domain.

This sequence belongs to the PCP4 family.

The polypeptide is Purkinje cell protein 4-like protein 1 (PCP4L1) (Homo sapiens (Human)).